Consider the following 76-residue polypeptide: Small ribosomal subunit protein bS18 (76 aa).

This sequence belongs to the bacterial ribosomal protein bS18 family. In terms of assembly, part of the 30S ribosomal subunit. Forms a tight heterodimer with protein bS6.

Binds as a heterodimer with protein bS6 to the central domain of the 16S rRNA, where it helps stabilize the platform of the 30S subunit. In Xylella fastidiosa (strain M23), this protein is Small ribosomal subunit protein bS18.